Here is a 288-residue protein sequence, read N- to C-terminus: Eukaryotic translation initiation factor 3 subunit F-2 (288 aa).

The 138-residue stretch at 12–149 (VLLHPLVLFQ…TRIFCAVATG (138 aa)) folds into the MPN domain.

It belongs to the eIF-3 subunit F family. In terms of assembly, component of the eukaryotic translation initiation factor 3 (eIF-3) complex. The eIF-3 complex interacts with pix.

Its subcellular location is the cytoplasm. Component of the eukaryotic translation initiation factor 3 (eIF-3) complex, which is involved in protein synthesis of a specialized repertoire of mRNAs and, together with other initiation factors, stimulates binding of mRNA and methionyl-tRNAi to the 40S ribosome. The eIF-3 complex specifically targets and initiates translation of a subset of mRNAs involved in cell proliferation. In Drosophila persimilis (Fruit fly), this protein is Eukaryotic translation initiation factor 3 subunit F-2.